Consider the following 171-residue polypeptide: Transcription antitermination protein NusB (171 aa).

The protein belongs to the NusB family.

Involved in transcription antitermination. Required for transcription of ribosomal RNA (rRNA) genes. Binds specifically to the boxA antiterminator sequence of the ribosomal RNA (rrn) operons. The polypeptide is Transcription antitermination protein NusB (Brucella suis (strain ATCC 23445 / NCTC 10510)).